Reading from the N-terminus, the 400-residue chain is MDKSKINFNYQSRAVYSANPQTSRGRLFHETMNTLRSPFQRDRDRIIHSNAFRRLKHKTQVFIADESDHYRTRLTHSIEVSQIARTLARALYLDEDLAESIALVHDFGHTPFGHAGEDALNEAMAPYGGFDHNAQALRIVTKLEQRYANFDGLNLTWETLEGLVKHNGPLLGPYAKNKDIPIDILQYNAKQDLQLNCFAGLEAQCAAIADDIAYNAHDVDDGLRSQFLTLDQFEQVSLTAALLNDIKKEHPQLDQTRRGYTLVRRQIKTMVEDVIKQSQENLARVKPKSISDVHQAEQTIVTFSPTMAVYERELKDFLFKNLYYHDQVLNRRNAAKRIVQKLFECYYENPDVMPENWHNKTAHLTNQELARLIADFLSGMTDHYALREYQHLFDCTDNFI.

The HD domain maps to 73–215 (RLTHSIEVSQ…AAIADDIAYN (143 aa)).

It belongs to the dGTPase family. Type 2 subfamily.

The chain is Deoxyguanosinetriphosphate triphosphohydrolase-like protein from Bartonella henselae (strain ATCC 49882 / DSM 28221 / CCUG 30454 / Houston 1) (Rochalimaea henselae).